The chain runs to 93 residues: UPF0358 protein BPUM_1375 (93 aa).

It belongs to the UPF0358 family.

In Bacillus pumilus (strain SAFR-032), this protein is UPF0358 protein BPUM_1375.